The chain runs to 158 residues: Phosphopantetheine adenylyltransferase (158 aa).

A substrate-binding site is contributed by Thr-8. ATP-binding positions include 8–9 and His-16; that span reads TF. 3 residues coordinate substrate: Lys-40, Leu-72, and Arg-86. Residues 87–89, Glu-97, and 122–128 each bind ATP; these read GLR and HAFISSS.

It belongs to the bacterial CoaD family. Homohexamer. Mg(2+) serves as cofactor.

The protein resides in the cytoplasm. The catalysed reaction is (R)-4'-phosphopantetheine + ATP + H(+) = 3'-dephospho-CoA + diphosphate. It functions in the pathway cofactor biosynthesis; coenzyme A biosynthesis; CoA from (R)-pantothenate: step 4/5. Its function is as follows. Reversibly transfers an adenylyl group from ATP to 4'-phosphopantetheine, yielding dephospho-CoA (dPCoA) and pyrophosphate. This is Phosphopantetheine adenylyltransferase from Campylobacter jejuni subsp. jejuni serotype O:6 (strain 81116 / NCTC 11828).